Reading from the N-terminus, the 699-residue chain is Extracellular matrix protein 2 (699 aa).

The first 20 residues, 1–20 (MKIAVLFCFFLLIIFQTDFG), serve as a signal peptide directing secretion. In terms of domain architecture, VWFC spans 101 to 158 (GHCLVKGITMYNKAVWSPEPCTTCLCSDGRVLCDETMCHPQRCPQTVIPEGECCPVCS). The segment covering 176-186 (EFSGDSSEQRE) has biased composition (basic and acidic residues). The disordered stretch occupies residues 176–316 (EFSGDSSEQR…PAPPRGTLRL (141 aa)). The segment covering 212–224 (QSEEDEEVKEEDT) has biased composition (acidic residues). Positions 243–260 (GDSRGGDRKQRPGEERRL) are enriched in basic and acidic residues. Residues 270-291 (EEEEDEEEEGEEGEEDEEDEED) are compositionally biased toward acidic residues. The Cell attachment site motif lies at 294–296 (RGD). Positions 307 to 344 (PAPPRGTLRLPSGCSLSYRTISCINAMLTQIPPLTAPQ) constitute an LRRNT domain. LRR repeat units follow at residues 368 to 388 (NLER…GPKA), 394 to 415 (KLMR…LPST), 416 to 436 (LEEL…SLSD), 439 to 459 (QLVT…NPLA), 465 to 484 (SLAY…QGLP), 486 to 507 (SIEE…CFNH), 510 to 530 (KINV…APLA), 536 to 557 (NLES…LPKS), 558 to 578 (LLHL…VFGH), 582 to 602 (GLEY…DRVS), 609 to 630 (SLRE…IQEM), 632 to 653 (ALHF…EICN), and 661 to 684 (NLEH…TFSC). N-linked (GlcNAc...) asparagine glycosylation is present at N378. N-linked (GlcNAc...) asparagine glycosylation occurs at N449. N-linked (GlcNAc...) asparagine glycosylation occurs at N506.

Belongs to the small leucine-rich proteoglycan (SLRP) family. SLRP class I subfamily. In terms of assembly, interacts with numerous extracellular matrix proteins. Interacts with MSL1 and RASSF1. In terms of tissue distribution, expressed predominantly in adipose tissue as well as female-specific organs such as mammary gland, ovary, and uterus.

The protein resides in the secreted. Its subcellular location is the extracellular space. It localises to the extracellular matrix. Functionally, promotes matrix assembly and cell adhesiveness. In Homo sapiens (Human), this protein is Extracellular matrix protein 2 (ECM2).